The chain runs to 1290 residues: Sorbin and SH3 domain-containing protein 1 (1290 aa).

Disordered stretches follow at residues 1–211 (MSSE…LSDV), 238–271 (HKLNRDDDSDVHSPRYSFSDDTKSPLSVPRSKSE), and 286–313 (TLPLPARSSSLKSSPERNDWEPLDKKVD). Low complexity predominate over residues 45-61 (SSSYRGTPSSSPVSPQE). T51 carries the phosphothreonine modification. S55, S58, and S62 each carry phosphoserine. A compositionally biased stretch (basic and acidic residues) spans 62-71 (SPKHESKSGL). 2 stretches are compositionally biased toward polar residues: residues 83 to 95 (LSSSADTNGNAQP) and 123 to 153 (EVSSSHIETDSQDFPPTSRPSSAYPSTTIVN). A compositionally biased stretch (basic and acidic residues) spans 161–173 (HNRDPASERRAGE). A phosphoserine mark is found at D164 and D175. A Phosphothreonine modification is found at T179. S185, A194, S204, S209, S254, S261, S270, and P288 each carry phosphoserine. Residues 189-199 (ASERRAKDASR) are compositionally biased toward basic and acidic residues. Residues 202-247 (VRSAQDLSDVSTDEVGIPLRNTERSKDWYKTMFKQIHKLNRDDDSD) form the SoHo domain. A compositionally biased stretch (basic and acidic residues) spans 240–260 (LNRDDDSDVHSPRYSFSDDTK). Residues 299–313 (SPERNDWEPLDKKVD) are compositionally biased toward basic and acidic residues. Y325 is subject to Phosphotyrosine; by ABL1. S345, P346, Y357, S376, and S407 each carry phosphoserine. The segment at 389–416 (VETVNKSPSANSPQSSAVSPTPDITSEP) is disordered. Over residues 392-412 (VNKSPSANSPQSSAVSPTPDI) the composition is skewed to polar residues. Y421 carries the post-translational modification Phosphotyrosine; by ABL1. Phosphoserine occurs at positions 432 and 470. Disordered stretches follow at residues 463–482 (LSGLKRPSSSASTKVDRKGG), 588–607 (YDSKSSSTMSLQEYGTSSRR), 697–739 (SLDF…EMDG), 783–803 (VSNDSREGSGGSVHGDFPKHR), 822–841 (RKHEQQSSRQSDWRSDSRGD), and 862–972 (PLQQ…SPRH). T475 is modified (phosphothreonine). Polar residues-rich tracts occupy residues 595 to 606 (TMSLQEYGTSSR) and 704 to 722 (LSKSPTPVLSRSGLTSARS). At S969 the chain carries Phosphoserine. SH3 domains are found at residues 1049-1108 (LEMR…LLPP) and 1123-1184 (LEYG…VLKR). T1189 carries the phosphothreonine modification. A phosphotyrosine mark is found at Y1193 and Y1198. Residues 1198–1210 (YSSSPSRSATVSP) are compositionally biased toward low complexity. Residues 1198-1227 (YSSSPSRSATVSPQQPQAQQRRVTPDRSQP) are disordered. S1201 and S1209 each carry phosphoserine. The segment covering 1211–1227 (QQPQAQQRRVTPDRSQP) has biased composition (polar residues). Positions 1229 to 1290 (LDLCSYQALY…PGNYVKPLYL (62 aa)) constitute an SH3 3 domain. Y1238 bears the Phosphotyrosine; by ABL1 mark.

Interacts (via SH3 domain 2) with PXN. Interacts with the long isoform of AFDN and with VCL. AFDN and VCL bind to SORBS1 in a competitive manner and do not form a ternary complex. Interacts with ABL1, CBL, CBLB and INPPL1/SHIP2 through the third SH3 domain. Interaction with ABL1 occurs only after insulin stimulation while this has no effect on the interaction with INPPL1. Interacts with the insulin receptor but dissociates from it following insulin stimulation. Also interacts with SCA7, PTK2/FAK1 and flotillin. Interacts (via third SH3 domain) with the Ten-1 ICD form of TENM1; the interaction induces the translocation of SORBS1 to the nucleus. Interacts with INSM1. Post-translationally, O-glycosylated. Expressed in all tissues tested: heart, brain, spleen, lung, liver, muscle, kidney and testis. Expressed in 3T3-L1 adipocytes but not in 3T3-L1 fibroblasts.

Its subcellular location is the cell junction. It localises to the adherens junction. The protein resides in the cell membrane. It is found in the cytoplasm. The protein localises to the cytoskeleton. Its subcellular location is the focal adhesion. It localises to the nucleus. The protein resides in the nucleus matrix. Plays a role in tyrosine phosphorylation of CBL by linking CBL to the insulin receptor. Required for insulin-stimulated glucose transport. Involved in formation of actin stress fibers and focal adhesions. The polypeptide is Sorbin and SH3 domain-containing protein 1 (Mus musculus (Mouse)).